The sequence spans 418 residues: Triacylglycerol lipase 2 (418 aa).

The signal sequence occupies residues 1-31; that stretch reads MAGSVMVPSVSIGLALSVLIFFALSLKTLEA. N-linked (GlcNAc...) asparagine glycosylation is present at asparagine 158. Serine 190 (nucleophile) is an active-site residue. N-linked (GlcNAc...) asparagine glycans are attached at residues asparagine 286 and asparagine 342. Active-site charge relay system residues include aspartate 360 and histidine 393.

It belongs to the AB hydrolase superfamily. Lipase family.

Its subcellular location is the secreted. It carries out the reaction a triacylglycerol + H2O = a diacylglycerol + a fatty acid + H(+). Its function is as follows. Triacylglycerol (TAG) lipase. May be involved for TAG storage breakdown during seed germination. This chain is Triacylglycerol lipase 2 (LIP2), found in Arabidopsis thaliana (Mouse-ear cress).